Consider the following 259-residue polypeptide: Phosphate import ATP-binding protein PstB 2 (259 aa).

The region spanning 12–254 (ISARGLNVHY…PKEPLTQGYI (243 aa)) is the ABC transporter domain. 44 to 51 (GPSGCGKS) contacts ATP.

It belongs to the ABC transporter superfamily. Phosphate importer (TC 3.A.1.7) family. In terms of assembly, the complex is composed of two ATP-binding proteins (PstB), two transmembrane proteins (PstC and PstA) and a solute-binding protein (PstS).

The protein localises to the cell inner membrane. It carries out the reaction phosphate(out) + ATP + H2O = ADP + 2 phosphate(in) + H(+). Its function is as follows. Part of the ABC transporter complex PstSACB involved in phosphate import. Responsible for energy coupling to the transport system. This is Phosphate import ATP-binding protein PstB 2 from Paramagnetospirillum magneticum (strain ATCC 700264 / AMB-1) (Magnetospirillum magneticum).